Here is a 224-residue protein sequence, read N- to C-terminus: Peroxynitrite isomerase 2 (224 aa).

A GXWXGXG motif is present at residues 71–77; the sequence is GVWRGEG. Residues Lys187 and His214 each coordinate heme b.

The protein belongs to the nitrobindin family. As to quaternary structure, homodimer. Heme b is required as a cofactor.

The catalysed reaction is peroxynitrite = nitrate. It participates in nitrogen metabolism. Its function is as follows. Heme-binding protein able to scavenge peroxynitrite and to protect free L-tyrosine against peroxynitrite-mediated nitration, by acting as a peroxynitrite isomerase that converts peroxynitrite to nitrate. Therefore, this protein likely plays a role in peroxynitrite sensing and in the detoxification of reactive nitrogen and oxygen species (RNS and ROS, respectively). Is able to bind nitric oxide (NO) in vitro, but may act as a sensor of peroxynitrite levels in vivo. The polypeptide is Peroxynitrite isomerase 2 (Mycobacterium sp. (strain JLS)).